Reading from the N-terminus, the 78-residue chain is MAQQRRGGRRRRKVDYIAANHIEYIDYKDTDLLRRFISERGKILPRRVTGTSAKNQRKLTVAIKRARIMGLLPFVAED.

This sequence belongs to the bacterial ribosomal protein bS18 family. In terms of assembly, part of the 30S ribosomal subunit. Forms a tight heterodimer with protein bS6.

Binds as a heterodimer with protein bS6 to the central domain of the 16S rRNA, where it helps stabilize the platform of the 30S subunit. The sequence is that of Small ribosomal subunit protein bS18 from Ligilactobacillus salivarius (strain UCC118) (Lactobacillus salivarius).